The following is a 316-amino-acid chain: Apolipoprotein E (316 aa).

The first 18 residues, 1 to 18, serve as a signal peptide directing secretion; that stretch reads MKVLWVALVVALLAGCQA. A run of 8 repeats spans residues 79–100, 101–122, 123–144, 145–166, 167–188, 189–210, 211–232, and 233–254. The 8 X 22 AA approximate tandem repeats stretch occupies residues 79 to 254; sequence VLMEETMKEV…RLDKMRQQLE (176 aa). Methionine sulfoxide is present on Met-142. Ser-146 carries the phosphoserine modification. The LDL and other lipoprotein receptors binding stretch occupies residues 157–167; it reads HLRKLRKRLLR. 161–164 contributes to the heparin binding site; it reads LRKR. The interval 209 to 289 is lipid-binding and lipoprotein association; sequence AATLSTQAAQ…SWFEPLVGDM (81 aa). Thr-211 carries an O-linked (GalNAc...) threonine glycan. Residue 228–235 participates in heparin binding; it reads RQKLHGRL. Residues 265 to 316 form a homooligomerization region; sequence SQIRLQAEAFQARLRSWFEPLVGDMQRQWAGLVEKVQLALHLSPTSPPSENH. Residues 277–289 form a specificity for association with VLDL region; the sequence is RLRSWFEPLVGDM.

The protein belongs to the apolipoprotein A1/A4/E family. As to quaternary structure, homotetramer. May interact with ABCA1; functionally associated with ABCA1 in the biogenesis of HDLs. May interact with APP/A4 amyloid-beta peptide; the interaction is extremely stable in vitro but its physiological significance is unclear. May interact with MAPT. May interact with MAP2. In the cerebrospinal fluid, interacts with secreted SORL1. Interacts with PMEL; this allows the loading of PMEL luminal fragment on ILVs to induce fibril nucleation. Post-translationally, APOE exists as multiple glycosylated and sialylated glycoforms within cells and in plasma. The extent of glycosylation and sialylation are tissue and context specific. In terms of processing, glycated in plasma VLDL. Phosphorylated by FAM20C in the extracellular medium.

The protein resides in the secreted. It localises to the extracellular space. Its subcellular location is the extracellular matrix. The protein localises to the extracellular vesicle. It is found in the endosome. The protein resides in the multivesicular body. In terms of biological role, APOE is an apolipoprotein, a protein associating with lipid particles, that mainly functions in lipoprotein-mediated lipid transport between organs via the plasma and interstitial fluids. APOE is a core component of plasma lipoproteins and is involved in their production, conversion and clearance. Apolipoproteins are amphipathic molecules that interact both with lipids of the lipoprotein particle core and the aqueous environment of the plasma. As such, APOE associates with chylomicrons, chylomicron remnants, very low density lipoproteins (VLDL) and intermediate density lipoproteins (IDL) but shows a preferential binding to high-density lipoproteins (HDL). It also binds a wide range of cellular receptors including the LDL receptor/LDLR and the very low-density lipoprotein receptor/VLDLR that mediate the cellular uptake of the APOE-containing lipoprotein particles. Finally, APOE also has a heparin-binding activity and binds heparan-sulfate proteoglycans on the surface of cells, a property that supports the capture and the receptor-mediated uptake of APOE-containing lipoproteins by cells. This chain is Apolipoprotein E (APOE), found in Capra hircus aegagrus (Wild goat).